Consider the following 463-residue polypeptide: Histone acetyltransferase mst1 (463 aa).

Residues 22–74 (VYKSKVFAFKDGEYRKAEILMIQKRTRGVVYYVHYNDYNKRLDEWITIDNIDL) form the Tudor-knot domain. Residues 76 to 145 (KGIEYPPPEK…GSNAGNESLP (70 aa)) are disordered. Positions 87–99 (KKAHGKGKSSKRP) are enriched in basic residues. The segment covering 111–121 (PSKTEPSTPST) has biased composition (low complexity). Positions 179-451 (ARIRNINKIC…NGDLLADWQP (273 aa)) constitute an MYST-type HAT domain. The segment at 212–237 (VYICSFCFCYYGSERQFQRHREKCTL) adopts a C2HC MYST-type zinc-finger fold. The ESA1-RPD3 motif signature appears at 262-283 (RTWCRNICLLSKLFLDHKMLYY). Lys-279 is modified (N6-acetyllysine; by autocatalysis). Residues 320–324 (ACILT) and 329–335 (QRHGYGK) contribute to the acetyl-CoA site. The active-site Proton donor/acceptor is Glu-355. Acetyl-CoA is bound at residue Ser-359.

The protein belongs to the MYST (SAS/MOZ) family. As to quaternary structure, component of the NuA4 histone acetyltransferase complex. Interacts with arp4. Post-translationally, autoacetylation at Lys-279 is required for proper function.

The protein resides in the nucleus. Its subcellular location is the chromosome. It carries out the reaction L-lysyl-[histone] + acetyl-CoA = N(6)-acetyl-L-lysyl-[histone] + CoA + H(+). The enzyme catalyses L-lysyl-[protein] + acetyl-CoA = N(6)-acetyl-L-lysyl-[protein] + CoA + H(+). The catalysed reaction is 2-hydroxyisobutanoyl-CoA + L-lysyl-[protein] = N(6)-(2-hydroxyisobutanoyl)-L-lysyl-[protein] + CoA + H(+). It catalyses the reaction (2E)-butenoyl-CoA + L-lysyl-[protein] = N(6)-(2E)-butenoyl-L-lysyl-[protein] + CoA + H(+). Functionally, catalytic component of the NuA4 histone acetyltransferase (HAT) complex which is involved in epigenetic transcriptional activation of selected genes principally by acetylation of nucleosomal histones H4, H3, H2B, H2A and H2A variant H2A.Z. Acetylates histone H4 to form H4K5ac, H4K8ac, H4K12ac and H4K16ac, histone H3 to form H3K14ac, and histone H2A to form H2AK4ac and H2AK7ac. The NuA4 complex is involved in the DNA damage response and is required for chromosome segregation. The NuA4 complex plays a direct role in repair of DNA double-strand breaks (DSBs) through homologous recombination. Recruitment to promoters depends on H3K4me. Also acetylates non-histone proteins. In addition to protein acetyltransferase, can use different acyl-CoA substrates, such as 2-hydroxyisobutanoyl-CoA (2-hydroxyisobutyryl-CoA) or (2E)-butenoyl-CoA (crotonyl-CoA), and is able to mediate protein 2-hydroxyisobutyrylation and crotonylation, respectively. This is Histone acetyltransferase mst1 from Schizosaccharomyces pombe (strain 972 / ATCC 24843) (Fission yeast).